A 558-amino-acid polypeptide reads, in one-letter code: S-layer protein (558 aa).

The N-terminal stretch at 1–28 (MAMSLKKIGAIAVGGAMVATALASGVAA) is a signal peptide. 7 N-linked (GlcNAc...) asparagine glycosylation sites follow: Asn112, Asn138, Asn158, Asn197, Asn226, Asn291, and Asn374.

It belongs to the Mj S-layer protein family.

The protein resides in the secreted. It localises to the cell wall. It is found in the S-layer. Functionally, S-layer protein. The S-layer is a paracrystalline mono-layered assembly of proteins which coat the surface of the cell. The chain is S-layer protein (sla) from Methanocaldococcus jannaschii (strain ATCC 43067 / DSM 2661 / JAL-1 / JCM 10045 / NBRC 100440) (Methanococcus jannaschii).